The sequence spans 109 residues: Large ribosomal subunit protein uL24 (109 aa).

Belongs to the universal ribosomal protein uL24 family. In terms of assembly, part of the 50S ribosomal subunit.

Its function is as follows. One of two assembly initiator proteins, it binds directly to the 5'-end of the 23S rRNA, where it nucleates assembly of the 50S subunit. One of the proteins that surrounds the polypeptide exit tunnel on the outside of the subunit. In Rickettsia massiliae (strain Mtu5), this protein is Large ribosomal subunit protein uL24.